Reading from the N-terminus, the 178-residue chain is Interleukin-10 (178 aa).

The first 18 residues, 1–18 (MHSSALLCCLVLLTGVRA), serve as a signal peptide directing secretion. 2 cysteine pairs are disulfide-bonded: Cys30–Cys126 and Cys80–Cys132. N-linked (GlcNAc...) asparagine glycosylation occurs at Asn134.

The protein belongs to the IL-10 family. In terms of assembly, homodimer. Interacts with IL10RA and IL10RB.

The protein resides in the secreted. Major immune regulatory cytokine that acts on many cells of the immune system where it has profound anti-inflammatory functions, limiting excessive tissue disruption caused by inflammation. Mechanistically, IL10 binds to its heterotetrameric receptor comprising IL10RA and IL10RB leading to JAK1 and STAT2-mediated phosphorylation of STAT3. In turn, STAT3 translocates to the nucleus where it drives expression of anti-inflammatory mediators. Targets antigen-presenting cells (APCs) such as macrophages and monocytes and inhibits their release of pro-inflammatory cytokines including granulocyte-macrophage colony-stimulating factor /GM-CSF, granulocyte colony-stimulating factor/G-CSF, IL-1 alpha, IL-1 beta, IL-6, IL-8 and TNF-alpha. Also interferes with antigen presentation by reducing the expression of MHC-class II and co-stimulatory molecules, thereby inhibiting their ability to induce T cell activation. In addition, controls the inflammatory response of macrophages by reprogramming essential metabolic pathways including mTOR signaling. In Cercocebus atys (Sooty mangabey), this protein is Interleukin-10 (IL10).